The sequence spans 194 residues: Large ribosomal subunit protein eL15 (194 aa).

The interval 160 to 194 (RGLTSAGKKGRGLMYKGKGTEKVRPSVRANSKKAK) is disordered.

This sequence belongs to the eukaryotic ribosomal protein eL15 family.

The polypeptide is Large ribosomal subunit protein eL15 (Methanococcus maripaludis (strain C7 / ATCC BAA-1331)).